A 526-amino-acid chain; its full sequence is Arylsulfatase G (526 aa).

A signal peptide spans 1-16 (MGWLFLKVLLVGMVFS). Ca(2+) is bound by residues aspartate 44, aspartate 45, and cysteine 84. Cysteine 84 acts as the Nucleophile in catalysis. Residue cysteine 84 is modified to 3-oxoalanine (Cys). An N-linked (GlcNAc...) asparagine glycan is attached at asparagine 117. A substrate-binding site is contributed by lysine 137. Histidine 139 is an active-site residue. Residue serine 162 participates in substrate binding. A glycan (N-linked (GlcNAc...) asparagine) is linked at asparagine 215. A substrate-binding site is contributed by histidine 251. 2 residues coordinate Ca(2+): aspartate 302 and asparagine 303. 2 N-linked (GlcNAc...) asparagine glycosylation sites follow: asparagine 356 and asparagine 497.

This sequence belongs to the sulfatase family. Requires Ca(2+) as cofactor. N-glycosylated with both high mannose and complex type sugars. In terms of processing, the conversion to 3-oxoalanine (also known as C-formylglycine, FGly), of a serine or cysteine residue in prokaryotes and of a cysteine residue in eukaryotes, is critical for catalytic activity. Post-translationally, 63-kDa precursor undergoes proteolytic processing in two steps, yielding two fragments in the first step (apparent molecular masses of 44 and 18 kDa). In the second step, the 44-kDa fragment is processed further to the 34- and 10-kDa chains. The 10-kDa chain is a cleavage product of the 44-kDa fragment but linked to the 18-kDa chain through a disulfide bridge.

Its subcellular location is the lysosome. The catalysed reaction is an aryl sulfate + H2O = a phenol + sulfate + H(+). It catalyses the reaction Hydrolysis of the 3-sulfate groups of the N-sulfo-D-glucosamine 3-O-sulfate units of heparin.. In terms of biological role, displays arylsulfatase activity at acidic pH towards the artificial substrate p-nitrocatechol sulfate. Catalyzes the hydrolysis of the 3-sulfate groups of the N-sulfo-D-glucosamine 3-O-sulfate units of heparin. The sequence is that of Arylsulfatase G (Arsg) from Rattus norvegicus (Rat).